The sequence spans 300 residues: tRNA uridine(34) hydroxylase (300 aa).

The Rhodanese domain occupies 128–222 (ADPEVIVVDT…YLEDVPQAQS (95 aa)). Residue Cys-182 is the Cysteine persulfide intermediate of the active site.

Belongs to the TrhO family.

It catalyses the reaction uridine(34) in tRNA + AH2 + O2 = 5-hydroxyuridine(34) in tRNA + A + H2O. In terms of biological role, catalyzes oxygen-dependent 5-hydroxyuridine (ho5U) modification at position 34 in tRNAs. This chain is tRNA uridine(34) hydroxylase, found in Deinococcus radiodurans (strain ATCC 13939 / DSM 20539 / JCM 16871 / CCUG 27074 / LMG 4051 / NBRC 15346 / NCIMB 9279 / VKM B-1422 / R1).